A 461-amino-acid chain; its full sequence is MPMLKIYNSITRQKQEFKPINPGKIGMYVCGVTIYDLCHIGHGRTFVSFDMIVRYLRYVGYEVNFQRNITDVDDKIIKRANENNESCEALTERLIGEMHRDFDALNMLRPDFEPRATLHIAEIIDMVELLLARGHAYVASDGDVLFSVASYPDYGRLSGQNLDQLQAGARVEVDENKQNPMDFVLWKMSKPGEPTWESPWGPGRPGWHIECSAMNSKHLGLHFDIHGGGSDLQFPHHENEIAQSCCAHDTPYVNYWMHTGMVMVDREKMSKSLGNFFTIRDVLGHYDAETVRYFLLSGHYRSQLNYSEDNLKQARSALERLYTAIKDVDLTVAAAPAEEFIVKFKAAMDDDFNTPEAYSVLFDMVRDINRLKATDIAKASALAVAMKQLADVLGLLGQDPDAFFKGEGSDDEVAEIEALIVERNRARSEKDWPAADVARNRLNELGVVLEDGPSGTTWRKK.

Cysteine 30 lines the Zn(2+) pocket. Positions 32 to 42 (VTIYDLCHIGH) match the 'HIGH' region motif. The Zn(2+) site is built by cysteine 211, histidine 236, and glutamate 240. The 'KMSKS' region signature appears at 268 to 272 (KMSKS). Lysine 271 provides a ligand contact to ATP.

This sequence belongs to the class-I aminoacyl-tRNA synthetase family. As to quaternary structure, monomer. It depends on Zn(2+) as a cofactor.

Its subcellular location is the cytoplasm. The catalysed reaction is tRNA(Cys) + L-cysteine + ATP = L-cysteinyl-tRNA(Cys) + AMP + diphosphate. This chain is Cysteine--tRNA ligase, found in Shewanella sp. (strain W3-18-1).